We begin with the raw amino-acid sequence, 188 residues long: Elongation factor P (188 aa).

It belongs to the elongation factor P family.

The protein resides in the cytoplasm. It participates in protein biosynthesis; polypeptide chain elongation. Its function is as follows. Involved in peptide bond synthesis. Stimulates efficient translation and peptide-bond synthesis on native or reconstituted 70S ribosomes in vitro. Probably functions indirectly by altering the affinity of the ribosome for aminoacyl-tRNA, thus increasing their reactivity as acceptors for peptidyl transferase. The chain is Elongation factor P from Streptomyces coelicolor (strain ATCC BAA-471 / A3(2) / M145).